The chain runs to 140 residues: uncharacterized protein (140 aa).

The 55-residue stretch at 26 to 80 (IRSQRETAHVSMRQLAERSGVSNPYLSQVERGLRKPSADVLSQIAKALRVSAEVL) folds into the HTH cro/C1-type domain. Residues 37 to 56 (MRQLAERSGVSNPYLSQVER) constitute a DNA-binding region (H-T-H motif).

This is an uncharacterized protein from Mycobacterium tuberculosis (strain ATCC 25618 / H37Rv).